The primary structure comprises 283 residues: Pantothenate synthetase (283 aa).

Met-30–His-37 serves as a coordination point for ATP. The active-site Proton donor is the His-37. Residue Gln-61 coordinates (R)-pantoate. Beta-alanine is bound at residue Gln-61. Gly-149–Asp-152 lines the ATP pocket. Gln-155 serves as a coordination point for (R)-pantoate. Residue Leu-186–Arg-189 coordinates ATP.

This sequence belongs to the pantothenate synthetase family. In terms of assembly, homodimer.

The protein localises to the cytoplasm. It carries out the reaction (R)-pantoate + beta-alanine + ATP = (R)-pantothenate + AMP + diphosphate + H(+). The protein operates within cofactor biosynthesis; (R)-pantothenate biosynthesis; (R)-pantothenate from (R)-pantoate and beta-alanine: step 1/1. Functionally, catalyzes the condensation of pantoate with beta-alanine in an ATP-dependent reaction via a pantoyl-adenylate intermediate. This Escherichia coli O6:H1 (strain CFT073 / ATCC 700928 / UPEC) protein is Pantothenate synthetase.